A 338-amino-acid chain; its full sequence is D-erythrose-4-phosphate dehydrogenase (338 aa).

12–13 (RI) is a binding site for NAD(+). Substrate contacts are provided by residues 154-156 (SCT), R200, 213-214 (TK), and R236. The active-site Nucleophile is C155. N318 contacts NAD(+).

Belongs to the glyceraldehyde-3-phosphate dehydrogenase family. Epd subfamily. Homotetramer.

The protein localises to the cytoplasm. The catalysed reaction is D-erythrose 4-phosphate + NAD(+) + H2O = 4-phospho-D-erythronate + NADH + 2 H(+). The protein operates within cofactor biosynthesis; pyridoxine 5'-phosphate biosynthesis; pyridoxine 5'-phosphate from D-erythrose 4-phosphate: step 1/5. In terms of biological role, catalyzes the NAD-dependent conversion of D-erythrose 4-phosphate to 4-phosphoerythronate. This Pectobacterium atrosepticum (strain SCRI 1043 / ATCC BAA-672) (Erwinia carotovora subsp. atroseptica) protein is D-erythrose-4-phosphate dehydrogenase.